We begin with the raw amino-acid sequence, 127 residues long: MPLFGSIFSPKKTPPRKSASLSNLHSLDRSTRELELGLDYGTPTMNLAGQSLKFENGQWVADSVISGGVDRRETQRLRKRNQQLEEENNLLRLKVDILLDMLSETTAESHLKDKELDELKVTNRRRK.

Positions 1-25 are disordered; that stretch reads MPLFGSIFSPKKTPPRKSASLSNLH. S9 and S20 each carry phosphoserine. Residues 60–112 form a minimal region for the interaction with PKD2 region; the sequence is VADSVISGGVDRRETQRLRKRNQQLEEENNLLRLKVDILLDMLSETTAESHLK. Positions 68 to 110 form a coiled coil; that stretch reads GVDRRETQRLRKRNQQLEEENNLLRLKVDILLDMLSETTAESH. The tract at residues 77-98 is leucine-zipper; mediates homodimerization; the sequence is LRKRNQQLEEENNLLRLKVDIL.

This sequence belongs to the chibby family. Homodimer. Homodimerization is essential for nuclear localization and interaction with KPNA4 but is dispensable for interaction with CTNNB1. Interacts with polycystin-2/PKD2 and GM130. Interacts with the C-terminal region of CTNNB1. Interacts (C-terminus) with TCIM (C-terminus), TCIM competes with CTNNB1 for the interaction with CBY1. Interacts with FAM92A; this interaction facilitates targeting of FAM92A to cilium basal body. Interacts with CIBAR2. Interacts with KPNA4. Found in heart, brain, lung, liver, muscle, kidney and testis. Levels are approximately 3-fold higher in embryonic and adult heart than in lung or liver.

The protein resides in the nucleus speckle. It localises to the cytoplasm. The protein localises to the cytoskeleton. Its subcellular location is the cilium basal body. It is found in the microtubule organizing center. The protein resides in the centrosome. It localises to the centriole. The protein localises to the golgi apparatus. Its subcellular location is the trans-Golgi network. It is found in the cell projection. The protein resides in the cilium. It localises to the flagellum. The protein localises to the nucleus. In terms of biological role, inhibits the Wnt/Wingless pathway by binding to CTNNB1/beta-catenin and inhibiting beta-catenin-mediated transcriptional activation through competition with TCF/LEF transcription factors. Has also been shown to play a role in regulating the intracellular trafficking of polycystin-2/PKD2 and possibly of other intracellular proteins. Promotes adipocyte and cardiomyocyte differentiation. This is Protein chibby homolog 1 (Cby1) from Mus musculus (Mouse).